A 569-amino-acid polypeptide reads, in one-letter code: Glutamate--tRNA ligase (569 aa).

The 'HIGH' region signature appears at Pro107 to His117.

This sequence belongs to the class-I aminoacyl-tRNA synthetase family. Glutamate--tRNA ligase type 2 subfamily.

The protein resides in the cytoplasm. The enzyme catalyses tRNA(Glu) + L-glutamate + ATP = L-glutamyl-tRNA(Glu) + AMP + diphosphate. Its function is as follows. Catalyzes the attachment of glutamate to tRNA(Glu) in a two-step reaction: glutamate is first activated by ATP to form Glu-AMP and then transferred to the acceptor end of tRNA(Glu). The protein is Glutamate--tRNA ligase of Nitrosopumilus maritimus (strain SCM1).